Reading from the N-terminus, the 236-residue chain is H2HPP isomerase (236 aa).

Cupin type-1 domains lie at 40–106 and 151–215; these read YVPP…AIDI and NIPG…SKSV. The a divalent metal cation site is built by histidine 50, histidine 52, glutamine 56, histidine 91, histidine 162, histidine 164, glutamine 168, and histidine 202. Tyrosine 223 serves as a coordination point for substrate.

In terms of assembly, monomer. Fe(2+) is required as a cofactor. Co(2+) serves as cofactor.

It localises to the cytoplasm. The catalysed reaction is 3-[(4R)-4-hydroxycyclohexa-1,5-dien-1-yl]-2-oxopropanoate = 3-[(1E,4R)-4-hydroxycyclohex-2-en-1-ylidene]pyruvate. It participates in antibiotic biosynthesis; bacilysin biosynthesis. Functionally, part of the bacABCDEF operon responsible for the biosynthesis of the nonribosomally synthesized dipeptide antibiotic bacilysin, composed of L-alanine and L-anticapsin. Bacilysin is an irreversible inactivator of the glutaminase domain of glucosamine synthetase. BacB catalyzes the allylic isomerization of the endocyclic-delta(4),delta(8)-7R-dihydro-hydroxyphenylpyruvate (en-H2HPP) to generate a mixture of 3E,7R- and 3Z, 7R-olefins of the exocyclic-delta(3),delta(5)-dihydro-hydroxyphenylpyruvate (ex-H2HPP). The protein is H2HPP isomerase of Bacillus subtilis.